A 446-amino-acid chain; its full sequence is Phosphoglucosamine mutase (446 aa).

The active-site Phosphoserine intermediate is Ser-100. Mg(2+) contacts are provided by Ser-100, Asp-241, Asp-243, and Asp-245. Ser-100 is modified (phosphoserine).

The protein belongs to the phosphohexose mutase family. Mg(2+) is required as a cofactor. Post-translationally, activated by phosphorylation.

The enzyme catalyses alpha-D-glucosamine 1-phosphate = D-glucosamine 6-phosphate. Functionally, catalyzes the conversion of glucosamine-6-phosphate to glucosamine-1-phosphate. The sequence is that of Phosphoglucosamine mutase from Methylobacterium nodulans (strain LMG 21967 / CNCM I-2342 / ORS 2060).